We begin with the raw amino-acid sequence, 186 residues long: Elongation factor P (186 aa).

This sequence belongs to the elongation factor P family.

The protein localises to the cytoplasm. Its pathway is protein biosynthesis; polypeptide chain elongation. Functionally, involved in peptide bond synthesis. Stimulates efficient translation and peptide-bond synthesis on native or reconstituted 70S ribosomes in vitro. Probably functions indirectly by altering the affinity of the ribosome for aminoacyl-tRNA, thus increasing their reactivity as acceptors for peptidyl transferase. In Maridesulfovibrio salexigens (strain ATCC 14822 / DSM 2638 / NCIMB 8403 / VKM B-1763) (Desulfovibrio salexigens), this protein is Elongation factor P.